The chain runs to 527 residues: Probable serine/threonine-protein kinase DDB_G0271538 (527 aa).

Over residues M1–I10 the composition is skewed to basic and acidic residues. The segment at M1–D24 is disordered. The region spanning L33–L294 is the Protein kinase domain. ATP-binding positions include I39–V47 and K60. D156 functions as the Proton acceptor in the catalytic mechanism. 3 disordered regions span residues V304–S375, F422–P452, and T485–L527. The segment covering D313–D324 has biased composition (acidic residues). The span at D325–N359 shows a compositional bias: low complexity. A compositionally biased stretch (acidic residues) spans V440–P452. The span at P512 to L527 shows a compositional bias: basic residues.

Belongs to the protein kinase superfamily. TKL Ser/Thr protein kinase family.

It carries out the reaction L-seryl-[protein] + ATP = O-phospho-L-seryl-[protein] + ADP + H(+). It catalyses the reaction L-threonyl-[protein] + ATP = O-phospho-L-threonyl-[protein] + ADP + H(+). The polypeptide is Probable serine/threonine-protein kinase DDB_G0271538 (Dictyostelium discoideum (Social amoeba)).